A 515-amino-acid polypeptide reads, in one-letter code: Vacuolar fusion protein CCZ1 homolog A (515 aa).

Belongs to the CCZ1 family. In terms of assembly, interacts with MON1.

It localises to the endosome. The protein resides in the prevacuolar compartment. In terms of biological role, plays an important role in membrane trafficking through the secretory apparatus. In complex with MON1, acts as a guanine exchange factor (GEF) for RABG3F of the Rab7 protein family. Promotes the exchange of GDP to GTP, converting RABG3F from an inactive GDP-bound form into an active GTP-bound form. The RABG3F active form is involved in protein trafficking from prevacuolar compartments (PVCs) to vacuoles. May serve as a linker between Rab5 and Rab7 protein families in PVCs and mediate PVC maturation. The chain is Vacuolar fusion protein CCZ1 homolog A from Arabidopsis thaliana (Mouse-ear cress).